The chain runs to 504 residues: Cytochrome P450 6B2 (504 aa).

Cys-445 provides a ligand contact to heme.

Belongs to the cytochrome P450 family. Heme serves as cofactor.

The protein localises to the endoplasmic reticulum membrane. Its subcellular location is the microsome membrane. It carries out the reaction an organic molecule + reduced [NADPH--hemoprotein reductase] + O2 = an alcohol + oxidized [NADPH--hemoprotein reductase] + H2O + H(+). In Helicoverpa armigera (Cotton bollworm), this protein is Cytochrome P450 6B2 (CYP6B2).